The primary structure comprises 178 residues: PEST proteolytic signal-containing nuclear protein (178 aa).

Over residues 1-15 (MADGKAGDEKPEKSQ) the composition is skewed to basic and acidic residues. Residues 1 to 82 (MADGKAGDEK…FAIGSQTTKK (82 aa)) form a disordered region. An N-acetylalanine modification is found at Ala2. Residues 37 to 47 (SSSNGGESSSR) are compositionally biased toward low complexity. Ser53 carries the post-translational modification Phosphoserine. Lys64 is subject to N6-acetyllysine. 3 positions are modified to phosphoserine: Ser77, Ser87, and Ser119. The tract at residues 134-178 (NIGRDTPTSAGPNSFNKGKHGFSDNQKLWERNIKSHLGNVHDQDN) is disordered. Thr139 carries the phosphothreonine modification. The span at 139–149 (TPTSAGPNSFN) shows a compositional bias: polar residues. A Phosphoserine modification is found at Ser147. 2 positions are modified to N6-acetyllysine: Lys150 and Lys152. A compositionally biased stretch (basic and acidic residues) spans 160 to 178 (KLWERNIKSHLGNVHDQDN).

Interacts with UHRF2/NIRF. In terms of processing, ubiquitinated; mediated by UHRF2 and leading to its subsequent proteasomal degradation. Post-translationally, N-terminally acetylated in a HYPK-dependent manner by the NatA acetyltransferase complex which is composed of NAA10 and NAA15.

The protein localises to the nucleus. In terms of biological role, may be involved in cell cycle regulation. The sequence is that of PEST proteolytic signal-containing nuclear protein (PCNP) from Homo sapiens (Human).